The chain runs to 485 residues: uncharacterized protein (485 aa).

The protein resides in the virion. This is an uncharacterized protein from Acanthamoeba polyphaga mimivirus (APMV).